We begin with the raw amino-acid sequence, 261 residues long: ATP synthase subunit a (261 aa).

Transmembrane regions (helical) follow at residues 28–48, 89–109, 140–160, 203–223, and 229–249; these read AVHLDSLGWSVFLGLVFLTIF, IAPLSLTIFVWILLMNSMDWV, NITFGLALGVFILIIYYSIKV, LFGNLYAGELIFLLIATIGVF, and FLWAAFHLLVIPLQAFIFMML.

The protein belongs to the ATPase A chain family. As to quaternary structure, F-type ATPases have 2 components, CF(1) - the catalytic core - and CF(0) - the membrane proton channel. CF(1) has five subunits: alpha(3), beta(3), gamma(1), delta(1), epsilon(1). CF(0) has three main subunits: a(1), b(2) and c(9-12). The alpha and beta chains form an alternating ring which encloses part of the gamma chain. CF(1) is attached to CF(0) by a central stalk formed by the gamma and epsilon chains, while a peripheral stalk is formed by the delta and b chains.

It is found in the cell inner membrane. Functionally, key component of the proton channel; it plays a direct role in the translocation of protons across the membrane. This is ATP synthase subunit a from Colwellia psychrerythraea (strain 34H / ATCC BAA-681) (Vibrio psychroerythus).